We begin with the raw amino-acid sequence, 695 residues long: Variediene synthase (695 aa).

The interval 1–23 (MVPTSLSPDDTSDPVPRSSSDIQ) is disordered. Residues 7–332 (SPDDTSDPVP…PRYHPWLCEE (326 aa)) are terpene cyclase. D98 is a Mg(2+) binding site. Substrate-binding positions include D98, 184–187 (RIID), N228, 232–236 (SFDIE), and 324–325 (RY). The short motif at 98–102 (DNVVE) is the DDXXD 1 element. The NSE/DTE signature appears at 228–236 (NDYFSFDIE). A disordered region spans residues 353-392 (RRSISGDSISSESSVWSGASDRSARSSVSSAPSLDEGKEP). A compositionally biased stretch (low complexity) spans 357–385 (SGDSISSESSVWSGASDRSARSSVSSAPS). Residues K415, R418, and H447 each contribute to the isopentenyl diphosphate site. Residues D454 and D458 each coordinate Mg(2+). Positions 454–458 (DDIED) match the DDXXD 2 motif. R463 serves as a coordination point for dimethylallyl diphosphate. R464 is an isopentenyl diphosphate binding site. Dimethylallyl diphosphate-binding residues include K541, T542, Q579, N586, K595, and K605.

The protein in the N-terminal section; belongs to the terpene synthase family. This sequence in the C-terminal section; belongs to the FPP/GGPP synthase family. In terms of assembly, hexamer. The cofactor is Mg(2+).

The enzyme catalyses isopentenyl diphosphate + (2E,6E)-farnesyl diphosphate = (2E,6E,10E)-geranylgeranyl diphosphate + diphosphate. It catalyses the reaction (2E,6E,10E)-geranylgeranyl diphosphate = variediene + diphosphate. It functions in the pathway secondary metabolite biosynthesis; terpenoid biosynthesis. In terms of biological role, bifunctional terpene synthase converts DMAPP and IPP, and also GGPP, into variediene as a single product. The C-terminal prenyltransferase domain of AbVS catalyzes formation of GGPP, whereas the N-terminal terpene cyclase domain catalyzes the cyclization of GGPP to variediene. The sequence is that of Variediene synthase from Aspergillus brasiliensis (strain CBS 101740 / IMI 381727 / IBT 21946).